We begin with the raw amino-acid sequence, 135 residues long: UPF0102 protein PGN_1801 (135 aa).

Belongs to the UPF0102 family.

In Porphyromonas gingivalis (strain ATCC 33277 / DSM 20709 / CIP 103683 / JCM 12257 / NCTC 11834 / 2561), this protein is UPF0102 protein PGN_1801.